A 168-amino-acid polypeptide reads, in one-letter code: MSATVHYKDIRKGMEKDLESLFKKYDSDRNGKITYIEIVETLRKAGKKNPERIADLLFRDDTDKNGELTIEEAKLRIVRMNDEKIEKVLNWDVEKFINDNDKDGDRKITRDEVLQRFTEQGAEDPELITDSIFRQMDLDRDGVITCDEIKEFNRKKKFSFLKSSAPKQ.

4 consecutive EF-hand domains span residues 13-48 (GMEKDLESLFKKYDSDRNGKITYIEIVETLRKAGKK), 48-83 (KNPERIADLLFRDDTDKNGELTIEEAKLRIVRMNDE), 88-123 (VLNWDVEKFINDNDKDGDRKITRDEVLQRFTEQGAE), and 124-159 (DPELITDSIFRQMDLDRDGVITCDEIKEFNRKKKFS). Residues D26, D28, N30, K32, E37, D61, D63, N65, E67, E72, D101, D103, D105, K107, E112, D137, D139, D141, and E148 each contribute to the Ca(2+) site.

In terms of biological role, not known; probably binds four calcium ions. This Dictyostelium discoideum (Social amoeba) protein is Calcium-binding protein 2 (cbp2).